The primary structure comprises 651 residues: Acetyl-coenzyme A synthetase (651 aa).

Residues 189–192 (RGGK), Thr311, and Asn335 each bind CoA. ATP contacts are provided by residues 387–389 (GEP), 411–416 (DTWWQT), Asp500, and Arg515. Ser523 serves as a coordination point for CoA. Residue Arg526 participates in ATP binding. Mg(2+)-binding residues include Val537, His539, and Val542. CoA is bound at residue Arg584. Residue Lys609 is modified to N6-acetyllysine.

This sequence belongs to the ATP-dependent AMP-binding enzyme family. The cofactor is Mg(2+). Acetylated. Deacetylation by the SIR2-homolog deacetylase activates the enzyme.

It carries out the reaction acetate + ATP + CoA = acetyl-CoA + AMP + diphosphate. In terms of biological role, catalyzes the conversion of acetate into acetyl-CoA (AcCoA), an essential intermediate at the junction of anabolic and catabolic pathways. AcsA undergoes a two-step reaction. In the first half reaction, AcsA combines acetate with ATP to form acetyl-adenylate (AcAMP) intermediate. In the second half reaction, it can then transfer the acetyl group from AcAMP to the sulfhydryl group of CoA, forming the product AcCoA. The protein is Acetyl-coenzyme A synthetase of Agrobacterium fabrum (strain C58 / ATCC 33970) (Agrobacterium tumefaciens (strain C58)).